Reading from the N-terminus, the 352-residue chain is C-C chemokine receptor type 5 (352 aa).

Residues 1–30 (MDYQVSSPTYDIDYYTSEPCQKTNVKQIAA) lie on the Extracellular side of the membrane. Tyr-3 carries the sulfotyrosine modification. O-linked (GalNAc...) serine glycans are attached at residues Ser-6 and Ser-7. Residues Tyr-10, Tyr-14, and Tyr-15 each carry the sulfotyrosine modification. 2 disulfides stabilise this stretch: Cys-20–Cys-269 and Cys-101–Cys-178. Residues 31-58 (RLLPPLYSLVFIFGFVGNMLVILILINC) form a helical membrane-spanning segment. Over 59-68 (KRLKSMTDIY) the chain is Cytoplasmic. Residues 69 to 89 (LLNLAISDLFFLLTVPFWAHY) form a helical membrane-spanning segment. Residues 90-102 (AAAQWDFGNTMCQ) are Extracellular-facing. A helical transmembrane segment spans residues 103–124 (LLTGLYFIGFFSGIFFIILLTI). Residues 125 to 141 (DRYLAIVHAVFALKART) are Cytoplasmic-facing. The helical transmembrane segment at 142–166 (VTFGVVTSVITWVVAVFASLPGIIF) threads the bilayer. At 167-198 (TRSQKEGLHYTCSSHFPYSQYQFWKNFQTLKI) the chain is on the extracellular side. Residues 199–218 (VILGLVLPLLVMVICYSGIL) form a helical membrane-spanning segment. The Cytoplasmic segment spans residues 219–235 (KTLLRCRNEKKRHRAVR). The chain crosses the membrane as a helical span at residues 236 to 260 (LIFTIMIVYFLFWAPYNIVLLLNTF). The Extracellular segment spans residues 261 to 277 (QEFFGLNNCSSSNRLDQ). A helical membrane pass occupies residues 278-301 (AMQVTETLGMTHCCINPIIYAFVG). At 302–352 (EKFRNYLLVFFQKHIAKRFCKCCSIFQQEAPERASSVYTRSTGEQEISVGL) the chain is on the cytoplasmic side. S-palmitoyl cysteine attachment occurs at residues Cys-321, Cys-323, and Cys-324. Ser-336, Ser-337, Ser-342, and Ser-349 each carry phosphoserine; by BARK1.

This sequence belongs to the G-protein coupled receptor 1 family. Interacts with PRAF2. Efficient ligand binding to CCL3/MIP-1alpha and CCL4/MIP-1beta requires sulfation, O-glycosylation and sialic acid modifications. Glycosylation on Ser-6 is required for efficient binding of CCL4. Interacts with GRK2. Interacts with ARRB1 and ARRB2. Interacts with CNIH4. Interacts with S100A4; this interaction stimulates T-lymphocyte chemotaxis. Post-translationally, sulfated on at least 2 of the N-terminal tyrosines. Sulfation is required for efficient binding of the chemokines, CCL3 and CCL4. In terms of processing, palmitoylation in the C-terminal is important for cell surface expression. Phosphorylation on serine residues in the C-terminal is stimulated by binding CC chemokines especially by APO-RANTES. Post-translationally, O-glycosylated, but not N-glycosylated. Ser-6 appears to be the major site even if Ser-7 may be also O-glycosylated. Also sialylated glycans present which contribute to chemokine binding. Thr-16 and Ser-17 may also be glycosylated and, if so, with small moieties such as a T-antigen.

It localises to the cell membrane. Functionally, receptor for a number of inflammatory CC-chemokines including CCL3/MIP-1-alpha, CCL4/MIP-1-beta and RANTES and subsequently transduces a signal by increasing the intracellular calcium ion level. May play a role in the control of granulocytic lineage proliferation or differentiation. Participates in T-lymphocyte migration to the infection site by acting as a chemotactic receptor. The protein is C-C chemokine receptor type 5 (CCR5) of Gorilla gorilla gorilla (Western lowland gorilla).